The chain runs to 89 residues: Mitochondrial import inner membrane translocase subunit Tim9 (89 aa).

N-acetylalanine is present on alanine 2. Residues 28-52 carry the Twin CX3C motif motif; that stretch reads CFLDCVKDFTTREVKPEEVTCSEHC. Cystine bridges form between cysteine 28-cysteine 52 and cysteine 32-cysteine 48.

This sequence belongs to the small Tim family. As to quaternary structure, heterohexamer; composed of 3 copies of TIMM9 and 3 copies of TIMM10/TIM10A, named soluble 70 kDa complex. The complex forms a 6-bladed alpha-propeller structure and associates with the TIMM22 component of the TIM22 complex. Interacts with multi-pass transmembrane proteins in transit. Also forms a complex composed of TIMM9, TIMM10/TIM10A and FXC1/TIM10B.

The protein resides in the mitochondrion inner membrane. In terms of biological role, mitochondrial intermembrane chaperone that participates in the import and insertion of multi-pass transmembrane proteins into the mitochondrial inner membrane. May also be required for the transfer of beta-barrel precursors from the TOM complex to the sorting and assembly machinery (SAM complex) of the outer membrane. Acts as a chaperone-like protein that protects the hydrophobic precursors from aggregation and guide them through the mitochondrial intermembrane space. The chain is Mitochondrial import inner membrane translocase subunit Tim9 (Timm9) from Mus musculus (Mouse).